Consider the following 132-residue polypeptide: ATP synthase epsilon chain (132 aa).

Belongs to the ATPase epsilon chain family. F-type ATPases have 2 components, CF(1) - the catalytic core - and CF(0) - the membrane proton channel. CF(1) has five subunits: alpha(3), beta(3), gamma(1), delta(1), epsilon(1). CF(0) has three main subunits: a, b and c.

The protein resides in the cell membrane. Produces ATP from ADP in the presence of a proton gradient across the membrane. This is ATP synthase epsilon chain from Desulforamulus reducens (strain ATCC BAA-1160 / DSM 100696 / MI-1) (Desulfotomaculum reducens).